The following is a 269-amino-acid chain: Protein TORNADO 2 (269 aa).

Topologically, residues 1–10 (MPLSNNVIGC) are cytoplasmic. Residues 11–31 (INFITVLLSIPVIGAGIWLAI) form a helical membrane-spanning segment. Topologically, residues 32–44 (GTVNSCVKLLQWP) are extracellular. Residues 45–65 (VIILGVLILLVGLAGFIGGFW) traverse the membrane as a helical segment. Residues 66–71 (RITWLL) are Cytoplasmic-facing. The helical transmembrane segment at 72 to 92 (VVYLIAMLILIVLLGCLVGFI) threads the bilayer. Topologically, residues 93–231 (YMVTIRGSGH…NIKVDWLKAD (139 aa)) are extracellular. Residue Asn-200 is glycosylated (N-linked (GlcNAc...) asparagine). The helical transmembrane segment at 232–252 (IFLLLALIGLIIVYIIGCCAF) threads the bilayer. The Cytoplasmic segment spans residues 253–269 (RNAETEDIFRKYKQGYT).

It belongs to the tetraspanin (TM4SF) family. Expressed in seedlings, roots, leaves, stems, apex, siliques and flowers. Present in ovules, prominently in nucellus and integuments.

It localises to the membrane. In terms of biological role, involved in the basipetal transport of auxin (IAA) that modulates growth and organs organization, as well as cell differentiation. Regulates shoot apical meristem (SAM) organization in the peripheral zone. Required for initial meristematic divisions in the epidermal/lateral root cap leading to the formation of epidermal cells and a clone of lateral root cap cells, as well as for the maintenance of the radial pattern of cell specification in the root, thus regulating the distinction between the lateral root cap and epidermis. Together with WIH peptides, promotes megasporogenesis. The polypeptide is Protein TORNADO 2 (TRN2) (Arabidopsis thaliana (Mouse-ear cress)).